Consider the following 299-residue polypeptide: MTDNTRLRIAMQKSGRLSDDSRELLARCGIKINLHTQRLIAMAENMPIDILRVRDDDIPGLVMDGVVDLGIIGENVLEEELLNRRAQGEDPRYFTLRRLDFGGCRLSLATPVDEAWDGPLSLNGKRIATSYPHLLKRYLDQKGISFKSCLLNGSVEVAPRAGLADAICDLVSTGATLEANGLREVEVIYRSKACLIQRDGEMEESKQQLIDKLLTRIQGVIQARESKYIMMHAPTDRLDEVIALLPGAERPTILPLAGDQQRVAMHMVSSETLFWETMEKLKALGASSILVLPIEKMME.

Belongs to the ATP phosphoribosyltransferase family. Long subfamily. As to quaternary structure, equilibrium between an active dimeric form, an inactive hexameric form and higher aggregates. Interconversion between the various forms is largely reversible and is influenced by the natural substrates and inhibitors of the enzyme. It depends on Mg(2+) as a cofactor.

The protein resides in the cytoplasm. It catalyses the reaction 1-(5-phospho-beta-D-ribosyl)-ATP + diphosphate = 5-phospho-alpha-D-ribose 1-diphosphate + ATP. It functions in the pathway amino-acid biosynthesis; L-histidine biosynthesis; L-histidine from 5-phospho-alpha-D-ribose 1-diphosphate: step 1/9. With respect to regulation, feedback inhibited by histidine. Functionally, catalyzes the condensation of ATP and 5-phosphoribose 1-diphosphate to form N'-(5'-phosphoribosyl)-ATP (PR-ATP). Has a crucial role in the pathway because the rate of histidine biosynthesis seems to be controlled primarily by regulation of HisG enzymatic activity. The chain is ATP phosphoribosyltransferase from Escherichia fergusonii (strain ATCC 35469 / DSM 13698 / CCUG 18766 / IAM 14443 / JCM 21226 / LMG 7866 / NBRC 102419 / NCTC 12128 / CDC 0568-73).